We begin with the raw amino-acid sequence, 348 residues long: Large ribosomal subunit protein uL10 (348 aa).

A disordered region spans residues 291–348 (LPEELRGVSAADTGAAEEEESTDEEAADADQADAAEDDDAADDDGDDEDAGDALGSLF). Positions 305–341 (AAEEEESTDEEAADADQADAAEDDDAADDDGDDEDAG) are enriched in acidic residues.

It belongs to the universal ribosomal protein uL10 family. Part of the 50S ribosomal subunit. Forms part of the ribosomal stalk which helps the ribosome interact with GTP-bound translation factors. Forms a heptameric L10(L12)2(L12)2(L12)2 complex, where L10 forms an elongated spine to which the L12 dimers bind in a sequential fashion.

Its function is as follows. Forms part of the ribosomal stalk, playing a central role in the interaction of the ribosome with GTP-bound translation factors. The chain is Large ribosomal subunit protein uL10 from Haloferax volcanii (strain ATCC 29605 / DSM 3757 / JCM 8879 / NBRC 14742 / NCIMB 2012 / VKM B-1768 / DS2) (Halobacterium volcanii).